We begin with the raw amino-acid sequence, 607 residues long: Sulfite reductase [NADPH] flavoprotein alpha-component (607 aa).

The Flavodoxin-like domain occupies Val66 to Leu204. Residues Ser72 to Gly77, Ser119 to Gly122, and Leu155 to Cys164 contribute to the FMN site. The 218-residue stretch at Gln239–Pro456 folds into the FAD-binding FR-type domain. Residues Thr327, Leu361, Arg395–Ser398, Thr413–Ala415, and Gly428–Ser431 contribute to the FAD site. Residues Ser527–Arg528, Lys533–Gln537, and Asp569 each bind NADP(+). Tyr607 lines the FAD pocket.

Belongs to the NADPH-dependent sulphite reductase flavoprotein subunit CysJ family. It in the N-terminal section; belongs to the flavodoxin family. The protein in the C-terminal section; belongs to the flavoprotein pyridine nucleotide cytochrome reductase family. In terms of assembly, alpha(8)-beta(8). The alpha component is a flavoprotein, the beta component is a hemoprotein. FAD is required as a cofactor. The cofactor is FMN.

The catalysed reaction is hydrogen sulfide + 3 NADP(+) + 3 H2O = sulfite + 3 NADPH + 4 H(+). Its pathway is sulfur metabolism; hydrogen sulfide biosynthesis; hydrogen sulfide from sulfite (NADPH route): step 1/1. Functionally, component of the sulfite reductase complex that catalyzes the 6-electron reduction of sulfite to sulfide. This is one of several activities required for the biosynthesis of L-cysteine from sulfate. The flavoprotein component catalyzes the electron flow from NADPH -&gt; FAD -&gt; FMN to the hemoprotein component. The protein is Sulfite reductase [NADPH] flavoprotein alpha-component of Shewanella oneidensis (strain ATCC 700550 / JCM 31522 / CIP 106686 / LMG 19005 / NCIMB 14063 / MR-1).